Here is a 391-residue protein sequence, read N- to C-terminus: Nucleosome assembly protein 1-like 1 (391 aa).

Residues 1 to 10 (MADIDNKEQS) show a composition bias toward basic and acidic residues. Residues 1–32 (MADIDNKEQSELDQDLEDVEEVEEEETGEETK) are disordered. Residue Ala2 is modified to N-acetylalanine. At Ser10 the chain carries Phosphoserine. Acidic residues predominate over residues 11–28 (ELDQDLEDVEEVEEEETG). Phosphothreonine occurs at positions 62 and 64. Ser69 is subject to Phosphoserine. Position 116 is an N6-acetyllysine (Lys116). Residues 125 to 150 (YEPTEEECEWKPDEEDEVSEELKEKA) carry the NAP1L motif motif. The span at 131–143 (ECEWKPDEEDEVS) shows a compositional bias: acidic residues. The tract at residues 131–163 (ECEWKPDEEDEVSEELKEKAKIEDEKKDEEKED) is disordered. The residue at position 143 (Ser143) is a Phosphoserine. Basic and acidic residues predominate over residues 144-163 (EELKEKAKIEDEKKDEEKED). The Nuclear localization signal signature appears at 273–279 (IKKKQKH). Residues 346-376 (AIEDDDDDYDEEGEEADEEGEEEGDEENDPD) are compositionally biased toward acidic residues. Residues 346–391 (AIEDDDDDYDEEGEEADEEGEEEGDEENDPDYDPKKDQNPAECKQQ) form a disordered region. Glu359 and Glu360 each carry 5-glutamyl polyglycine. Basic and acidic residues predominate over residues 377–391 (YDPKKDQNPAECKQQ). Cys388 bears the Cysteine methyl ester mark. Cys388 is lipidated: S-farnesyl cysteine. A propeptide spans 389–391 (KQQ) (removed in mature form).

The protein belongs to the nucleosome assembly protein (NAP) family. As to quaternary structure, homodimer. The dimer binds strongly and sequentially to single and double H2A-H2B heterodimers. Interacts with ERCC6; this interaction increases ERCC6 processivity. Interacts with RAD54. Interacts with SETD1A. Post-translationally, polyglycylated by TTLL10 on glutamate residues, resulting in polyglycine chains on the gamma-carboxyl group. Both polyglutamylation and polyglycylation modifications can coexist on the same protein on adjacent residues, and lowering polyglycylation levels increases polyglutamylation, and reciprocally. Polyglutamylated by TTLL4 on glutamate residues, resulting in polyglutamate chains on the gamma-carboxyl group. Both polyglutamylation and polyglycylation modifications can coexist on the same protein on adjacent residues, and lowering polyglycylation levels increases polyglutamylation, and reciprocally. In terms of tissue distribution, highly expressed in the brain (at protein level). High expression in cerebral cortex, not in cerebellar cortex.

It is found in the nucleus. Its subcellular location is the cytoplasm. The protein localises to the melanosome. Functionally, histone chaperone that plays a role in the nuclear import of H2A-H2B and nucleosome assembly. Also participates in several important DNA repair mechanisms: greatly enhances ERCC6-mediated chromatin remodeling which is essential for transcription-coupled nucleotide excision DNA repair. Also stimulates homologous recombination (HR) by RAD51 and RAD54 which is essential in mitotic DNA double strand break (DSB) repair. Plays a key role in the regulation of embryonic neurogenesis. Promotes the proliferation of neural progenitors and inhibits neuronal differentiation during cortical development. Regulates neurogenesis via the modulation of RASSF10; regulates RASSF10 expression by promoting SETD1A-mediated H3K4 methylation at the RASSF10 promoter. The protein is Nucleosome assembly protein 1-like 1 (Nap1l1) of Mus musculus (Mouse).